The sequence spans 188 residues: dCTP deaminase (188 aa).

Residues 111–116 (KSTYAR), 135–137 (TLE), glutamine 156, tyrosine 170, lysine 179, and glutamine 180 each bind dCTP. The active-site Proton donor/acceptor is the glutamate 137.

Belongs to the dCTP deaminase family. In terms of assembly, homotrimer.

It carries out the reaction dCTP + H2O + H(+) = dUTP + NH4(+). Its pathway is pyrimidine metabolism; dUMP biosynthesis; dUMP from dCTP (dUTP route): step 1/2. Functionally, catalyzes the deamination of dCTP to dUTP. The sequence is that of dCTP deaminase from Rickettsia felis (strain ATCC VR-1525 / URRWXCal2) (Rickettsia azadi).